A 226-amino-acid chain; its full sequence is Transmembrane protein 204 (226 aa).

Residues 1–5 lie on the Cytoplasmic side of the membrane; sequence MTVQK. The helical transmembrane segment at 6–26 threads the bilayer; it reads LVATAVLVALVSLILNNAAAF. The Extracellular portion of the chain corresponds to 27 to 103; that stretch reads TPNWVYQTLE…LQFDMMRACN (77 aa). The chain crosses the membrane as a helical span at residues 104-124; that stretch reads LVATAALAVGQITFILGLTGL. The Cytoplasmic segment spans residues 125-136; sequence PLMSPESQCWEE. The chain crosses the membrane as a helical span at residues 137-157; sequence AMAAAFQLASFVLVIGLVTFY. The Extracellular segment spans residues 158–170; sequence RIGPYTNLSWSCY. N-linked (GlcNAc...) asparagine glycosylation is present at asparagine 164. Residues 171-191 form a helical membrane-spanning segment; that stretch reads LNIGACLLATLAAAMLIWNIL. The Cytoplasmic portion of the chain corresponds to 192–226; sequence HRREDCMAPRVIVISRSLTARFRRGLDNDYVESPC.

The protein resides in the cell junction. Its subcellular location is the adherens junction. It localises to the cell membrane. In terms of biological role, can influence paracellular permeability. Appears to be involved in cell-cell interactions through adherens. This Rattus norvegicus (Rat) protein is Transmembrane protein 204 (Tmem204).